We begin with the raw amino-acid sequence, 506 residues long: Cobyric acid synthase (506 aa).

Positions 251–448 (DITIAIVQLP…LHGLFDSDAF (198 aa)) constitute a GATase cobBQ-type domain. C332 acts as the Nucleophile in catalysis. H440 is a catalytic residue.

This sequence belongs to the CobB/CobQ family. CobQ subfamily.

Its pathway is cofactor biosynthesis; adenosylcobalamin biosynthesis. Functionally, catalyzes amidations at positions B, D, E, and G on adenosylcobyrinic A,C-diamide. NH(2) groups are provided by glutamine, and one molecule of ATP is hydrogenolyzed for each amidation. The protein is Cobyric acid synthase of Salmonella heidelberg (strain SL476).